Here is a 91-residue protein sequence, read N- to C-terminus: uncharacterized protein (91 aa).

A disordered region spans residues 71–91 (NRENNSRSSVKQIINQETEEE). The span at 76–91 (SRSSVKQIINQETEEE) shows a compositional bias: polar residues.

This is an uncharacterized protein from Bacillus subtilis (strain 168).